Consider the following 380-residue polypeptide: Cytochrome b (380 aa).

Helical transmembrane passes span 34-54, 78-99, 114-134, and 179-199; these read FGSLLGLCLMTQILTGLLLAM, WLIRNLHANGASFFFICIYLHI, WNTGVILLLTLMATAFVGYVL, and FFALHFLLPFMIAGLTLIHLT. Heme b contacts are provided by H84 and H98. 2 residues coordinate heme b: H183 and H197. H202 is an a ubiquinone binding site. 4 helical membrane passes run 227-247, 289-309, 321-341, and 348-368; these read TKDLLGFLLMIAPLLTLAMFS, LGGVLALAASVLILFLAPFLH, LSQLLFWILVANLLILTWVGS, and FIIIGQIASLTYFTILLILFP.

The protein belongs to the cytochrome b family. The cytochrome bc1 complex contains 11 subunits: 3 respiratory subunits (MT-CYB, CYC1 and UQCRFS1), 2 core proteins (UQCRC1 and UQCRC2) and 6 low-molecular weight proteins (UQCRH/QCR6, UQCRB/QCR7, UQCRQ/QCR8, UQCR10/QCR9, UQCR11/QCR10 and a cleavage product of UQCRFS1). This cytochrome bc1 complex then forms a dimer. Heme b serves as cofactor.

The protein localises to the mitochondrion inner membrane. Functionally, component of the ubiquinol-cytochrome c reductase complex (complex III or cytochrome b-c1 complex) that is part of the mitochondrial respiratory chain. The b-c1 complex mediates electron transfer from ubiquinol to cytochrome c. Contributes to the generation of a proton gradient across the mitochondrial membrane that is then used for ATP synthesis. In Amazilia tzacatl (Rufous-tailed hummingbird), this protein is Cytochrome b (MT-CYB).